A 271-amino-acid chain; its full sequence is Phosphatidylinositol transfer protein beta isoform (271 aa).

The residue at position 215 (K215) is an N6-acetyllysine. Residue S262 is modified to Phosphoserine; by PKC.

It belongs to the PtdIns transfer protein family. PI transfer class I subfamily. Post-translationally, constitutive phosphorylation of Ser-262 has no effect on phospholipid transfer activity but is required for Golgi targeting.

It localises to the golgi apparatus. Its subcellular location is the golgi apparatus membrane. The protein resides in the endoplasmic reticulum membrane. It carries out the reaction a 1,2-diacyl-sn-glycero-3-phosphocholine(in) = a 1,2-diacyl-sn-glycero-3-phosphocholine(out). The enzyme catalyses a 1,2-diacyl-sn-glycero-3-phospho-(1D-myo-inositol)(in) = a 1,2-diacyl-sn-glycero-3-phospho-(1D-myo-inositol)(out). It catalyses the reaction an N-(acyl)-sphingosylphosphocholine(in) = an N-(acyl)-sphingosylphosphocholine(out). Functionally, catalyzes the transfer of phosphatidylinositol, phosphatidylcholine and sphingomyelin between membranes. Required for COPI-mediated retrograde transport from the Golgi to the endoplasmic reticulum; phosphatidylinositol and phosphatidylcholine transfer activity is essential for this function. In Mus musculus (Mouse), this protein is Phosphatidylinositol transfer protein beta isoform (Pitpnb).